The primary structure comprises 640 residues: Paramyosin, short form (640 aa).

Nonhelical region regions lie at residues 1–122 (MALA…PDTV) and 420–640 (KLEQ…TITE). Residues 123 to 619 (VERSRQRRRR…IIRAKHRTFV (497 aa)) adopt a coiled-coil conformation.

The protein belongs to the paramyosin family. Post-translationally, phosphorylated. In terms of tissue distribution, found in all adult muscle tissues except in indirect flight muscles and a set of temporary abdominal muscles. Not detected in larval muscle.

The protein localises to the cytoplasm. It is found in the myofibril. In terms of biological role, paramyosin is a major structural component of many thick filaments isolated from invertebrate muscles. The polypeptide is Paramyosin, short form (Prm) (Drosophila melanogaster (Fruit fly)).